The chain runs to 180 residues: Transcription factor HES-7.1-A (180 aa).

Residues 13–70 (HRKLLKPLVEKRRRERINNSLEKLRIFLFQTLKSEKLKNPKVEKAEILECTVQFLQSR) form the bHLH domain. An Orange domain is found at 84–116 (YQSGFQHCLETTLHFMNSKPDMNGVTKELLSHQ). The WRPW motif signature appears at 176-179 (WRPW).

Transcription repression requires formation of a complex with a corepressor protein of the Groucho/TLE family. Expressed in the presumptive midbrain-hindbrain boundary (MHB) as early as the early gastrula stage (stage 10.5). Expression in the MHB continues through to tailbud stage. Also transiently expressed in the eye anlage at late neurula stage.

The protein localises to the nucleus. Transcriptional repressor. Represses transcription from both N box- and E box-containing promoters. Demarcates the prospective midbrain-hindbrain boundary (MHB) region in the neuroectoderm in early gastrulae embryos by repressing transcription of a number of target genes. The chain is Transcription factor HES-7.1-A (hes7.1-a) from Xenopus laevis (African clawed frog).